Consider the following 207-residue polypeptide: Ras-related protein Rab-8B (207 aa).

GTP is bound by residues Ser17, Gly18, Val19, Gly20, Lys21, Thr22, Cys23, Thr35, Ser39, and Thr40. Thr22 is a binding site for Mg(2+). 2 consecutive short sequence motifs (switch) follow at residues 31-45 (DAFN…GIDF) and 63-80 (DTAG…YYRG). Mg(2+) is bound by residues Thr40 and Asp63. Gly66 serves as a coordination point for GTP. Phosphothreonine is present on Thr72. Asn121, Lys122, Asp124, Ala152, and Lys153 together coordinate GTP. At Ser180 the chain carries Phosphoserine. A Cysteine methyl ester modification is found at Cys204. Cys204 is lipidated: S-geranylgeranyl cysteine. A propeptide spans 205–207 (LLL) (removed in mature form).

This sequence belongs to the small GTPase superfamily. Rab family. As to quaternary structure, associated with actin, delta-catenin and alpha and beta tubulins. Interacts with OTOF. Interacts with PEX5R. Interacts with RAB3IP. Interacts with VIM. Interacts with CDH1. Interacts with MICALL2. Interacts with GDI1, GDI2, CHML and CHM; phosphorylation at Thr-72 disrupts these interactions. Interacts with MICAL1. Requires Mg(2+) as cofactor. Phosphorylation of Thr-72 in the switch II region by LRRK2 prevents the association of RAB regulatory proteins, including CHM, CHML and RAB GDP dissociation inhibitors GDI1 and GDI2.

The protein resides in the cell membrane. It localises to the cytoplasmic vesicle. Its subcellular location is the phagosome membrane. The protein localises to the endosome membrane. The enzyme catalyses GTP + H2O = GDP + phosphate + H(+). With respect to regulation, regulated by guanine nucleotide exchange factors (GEFs) including RAB3IP/RABIN8 which promotes the exchange of bound GDP for free GTP. Regulated by GTPase activating proteins (GAPs) which increase the GTP hydrolysis activity. Inhibited by GDP dissociation inhibitors (GDIs). In terms of biological role, the small GTPases Rab are key regulators of intracellular membrane trafficking, from the formation of transport vesicles to their fusion with membranes. Rabs cycle between an inactive GDP-bound form and an active GTP-bound form that is able to recruit to membranes different sets of downstream effectors directly responsible for vesicle formation, movement, tethering and fusion. RAB8B may be involved in polarized vesicular trafficking and neurotransmitter release. May participate in cell junction dynamics in Sertoli cells. May also participate in the export of a subset of neosynthesized proteins through a Rab8-Rab10-Rab11-dependent endososomal export route. The polypeptide is Ras-related protein Rab-8B (RAB8B) (Pongo abelii (Sumatran orangutan)).